Here is a 347-residue protein sequence, read N- to C-terminus: uncharacterized protein (347 aa).

2 coiled-coil regions span residues 148–201 (DQQS…EKDG) and 261–298 (LENL…DTFS). The segment at 151–203 (SISNLRKEEKEKQKENENENENENENENENEKENQELDKKVNQTNDNEKDGDE) is disordered. The segment covering 155 to 167 (LRKEEKEKQKENE) has biased composition (basic and acidic residues). Positions 168-178 (NENENENENEN) are enriched in acidic residues. Basic and acidic residues predominate over residues 179 to 191 (ENEKENQELDKKV).

This is an uncharacterized protein from Dictyostelium discoideum (Social amoeba).